A 344-amino-acid chain; its full sequence is N-acetyl-gamma-glutamyl-phosphate reductase (344 aa).

Residue Cys148 is part of the active site.

It belongs to the NAGSA dehydrogenase family. Type 1 subfamily.

The protein resides in the cytoplasm. The catalysed reaction is N-acetyl-L-glutamate 5-semialdehyde + phosphate + NADP(+) = N-acetyl-L-glutamyl 5-phosphate + NADPH + H(+). Its pathway is amino-acid biosynthesis; L-arginine biosynthesis; N(2)-acetyl-L-ornithine from L-glutamate: step 3/4. In terms of biological role, catalyzes the NADPH-dependent reduction of N-acetyl-5-glutamyl phosphate to yield N-acetyl-L-glutamate 5-semialdehyde. The chain is N-acetyl-gamma-glutamyl-phosphate reductase from Clostridium botulinum (strain Alaska E43 / Type E3).